The primary structure comprises 288 residues: Acetyl-coenzyme A carboxylase carboxyl transferase subunit beta (288 aa).

Residues 34 to 288 (LFAKCPACKH…HLVAFHGGGQ (255 aa)) form the CoA carboxyltransferase N-terminal domain. Positions 38, 41, 56, and 59 each coordinate Zn(2+). The C4-type zinc finger occupies 38-59 (CPACKHMIYKKDLGLAKICPTC).

This sequence belongs to the AccD/PCCB family. As to quaternary structure, acetyl-CoA carboxylase is a heterohexamer composed of biotin carboxyl carrier protein (AccB), biotin carboxylase (AccC) and two subunits each of ACCase subunit alpha (AccA) and ACCase subunit beta (AccD). Requires Zn(2+) as cofactor.

Its subcellular location is the cytoplasm. It catalyses the reaction N(6)-carboxybiotinyl-L-lysyl-[protein] + acetyl-CoA = N(6)-biotinyl-L-lysyl-[protein] + malonyl-CoA. Its pathway is lipid metabolism; malonyl-CoA biosynthesis; malonyl-CoA from acetyl-CoA: step 1/1. Component of the acetyl coenzyme A carboxylase (ACC) complex. Biotin carboxylase (BC) catalyzes the carboxylation of biotin on its carrier protein (BCCP) and then the CO(2) group is transferred by the transcarboxylase to acetyl-CoA to form malonyl-CoA. The chain is Acetyl-coenzyme A carboxylase carboxyl transferase subunit beta from Streptococcus dysgalactiae subsp. equisimilis (strain GGS_124).